Reading from the N-terminus, the 200-residue chain is MKKELTDRQKKILDFVLSYIDSHGYPPSIRDIARAFRITPRGAIVHLNALEKKGYLTRGKRARSIKVLNRSEAIRLPVVGTIAAGNAIEAIENPTEIIEVPKAMIKIGFDHFLLRVRGESMIEEHILDKDYVVIRKQNTANNGDIVAVLTNSNEATLKKIYIEPEKIILKPANSKMQPIELKPENVKILGKMVGVIRIYG.

Positions 29-48 (IRDIARAFRITPRGAIVHLN) form a DNA-binding region, H-T-H motif. Catalysis depends on for autocatalytic cleavage activity residues serine 120 and lysine 158.

Belongs to the peptidase S24 family. Homodimer.

The catalysed reaction is Hydrolysis of Ala-|-Gly bond in repressor LexA.. Represses a number of genes involved in the response to DNA damage (SOS response), including recA and lexA. In the presence of single-stranded DNA, RecA interacts with LexA causing an autocatalytic cleavage which disrupts the DNA-binding part of LexA, leading to derepression of the SOS regulon and eventually DNA repair. This is LexA repressor from Pseudothermotoga lettingae (strain ATCC BAA-301 / DSM 14385 / NBRC 107922 / TMO) (Thermotoga lettingae).